Consider the following 461-residue polypeptide: Cysteine--tRNA ligase (461 aa).

Residue cysteine 28 coordinates Zn(2+). The short motif at 30–40 (ITVYDLCHIGH) is the 'HIGH' region element. Residues cysteine 209, histidine 234, and glutamate 238 each coordinate Zn(2+). The 'KMSKS' region motif lies at 266–270 (KMSKS). Lysine 269 is an ATP binding site.

It belongs to the class-I aminoacyl-tRNA synthetase family. As to quaternary structure, monomer. It depends on Zn(2+) as a cofactor.

Its subcellular location is the cytoplasm. The enzyme catalyses tRNA(Cys) + L-cysteine + ATP = L-cysteinyl-tRNA(Cys) + AMP + diphosphate. In Shigella sonnei (strain Ss046), this protein is Cysteine--tRNA ligase.